We begin with the raw amino-acid sequence, 380 residues long: DNA replication and repair protein RecF (380 aa).

30 to 37 (GENAQGKT) contacts ATP.

It belongs to the RecF family.

It localises to the cytoplasm. In terms of biological role, the RecF protein is involved in DNA metabolism; it is required for DNA replication and normal SOS inducibility. RecF binds preferentially to single-stranded, linear DNA. It also seems to bind ATP. The sequence is that of DNA replication and repair protein RecF from Synechococcus sp. (strain JA-2-3B'a(2-13)) (Cyanobacteria bacterium Yellowstone B-Prime).